The sequence spans 212 residues: ER lumen protein-retaining receptor 1 (212 aa).

Residues 1–4 are Lumenal-facing; the sequence is MNLF. Residues 5 to 24 form a helical membrane-spanning segment; that stretch reads RFLGDLSHLLAIILLLLKIW. Over 25–32 the chain is Cytoplasmic; that stretch reads KSRSCAGI. The chain crosses the membrane as a helical span at residues 33 to 52; it reads SGKSQVLFAVVFTARYLDLF. Positions 47 to 48 are interaction with the K-D-E-L motif on target proteins; sequence RY. Topologically, residues 53–58 are lumenal; it reads TNYISL. Residues 59 to 79 form a helical membrane-spanning segment; sequence YNTCMKVVYIACSFTTVWLIY. Topologically, residues 80-92 are cytoplasmic; sequence SKFKATYDGNHDT. Residues 93-110 traverse the membrane as a helical segment; it reads FRVEFLVVPTAILAFLVN. The Lumenal portion of the chain corresponds to 111-116; that stretch reads HDFTPL. The helical transmembrane segment at 117-135 threads the bilayer; it reads EILWTFSIYLESVAILPQL. The Cytoplasmic portion of the chain corresponds to 136-149; it reads FMVSKTGEAETITS. The chain crosses the membrane as a helical span at residues 150–168; it reads HYLFALGVYRTLYLFNWIW. Residues 159–169 form an interaction with the K-D-E-L motif on target proteins region; sequence RTLYLFNWIWR. Residues 169 to 178 lie on the Lumenal side of the membrane; that stretch reads RYHFEGFFDL. A helical transmembrane segment spans residues 179–199; that stretch reads IAIVAGLVQTVLYCDFFYLYI. At 200–212 the chain is on the cytoplasmic side; it reads TKVLKGKKLSLPA. The tract at residues 204–207 is important for recycling of cargo proteins with the sequence motif K-D-E-L from the Golgi to the endoplasmic reticulum; the sequence is KGKK. S209 carries the phosphoserine; by PKA modification.

This sequence belongs to the ERD2 family. In terms of assembly, upon ligand binding the receptor oligomerizes and interacts with components of the transport machinery such as ARFGAP1 and ARF1. Phosphorylation by PKA at Ser-209 is required for endoplasmic reticulum retention function.

It is found in the golgi apparatus membrane. The protein localises to the cytoplasmic vesicle. The protein resides in the COPI-coated vesicle membrane. Its subcellular location is the endoplasmic reticulum membrane. It localises to the endoplasmic reticulum-Golgi intermediate compartment membrane. Receptor for the C-terminal sequence motif K-D-E-L that is present on endoplasmic reticulum resident proteins and that mediates their recycling from the Golgi back to the endoplasmic reticulum. This chain is ER lumen protein-retaining receptor 1 (KDELR1), found in Homo sapiens (Human).